The following is an 82-amino-acid chain: U1-plectoxin-Pt1a (82 aa).

Residues 1 to 20 (MKHLIFSSALVCALVVCTFA) form the signal peptide. Positions 21–33 (EEQVNVPFLPDER) are excised as a propeptide. 5 disulfide bridges follow: Cys-37-Cys-51, Cys-44-Cys-57, Cys-50-Cys-68, Cys-54-Cys-77, and Cys-59-Cys-66. Ser-79 carries O-palmitoyl serine lipidation. The propeptide occupies 80 to 82 (RRR).

Belongs to the neurotoxin 02 (plectoxin) family. 02 (plectoxin) subfamily. Post-translationally, plectoxin-5 presumably undergoes post-translational modification to give rise to plectoxin-6. As to expression, expressed by the venom gland.

Its subcellular location is the secreted. Potent toxin that may paralyze and/or kill insect pests such as H.virescens (lepidoptera), S.exigua (beet armyworm) and M.sexta (tobacco hornworm). In Plectreurys tristis (Spider), this protein is U1-plectoxin-Pt1a.